Consider the following 177-residue polypeptide: Putative pre-16S rRNA nuclease (177 aa).

The protein belongs to the YqgF nuclease family.

The protein localises to the cytoplasm. In terms of biological role, could be a nuclease involved in processing of the 5'-end of pre-16S rRNA. The protein is Putative pre-16S rRNA nuclease of Psychrobacter sp. (strain PRwf-1).